Reading from the N-terminus, the 324-residue chain is Aprataxin (324 aa).

The 50-residue stretch at 23–72 folds into the FHA-like domain; sequence SVTLGRGPDTKIKDKKCSREQVELRADCNRGFVTVKQLGVNPTLVDDVVV. The segment at 100–160 is disordered; that stretch reads TEDTSRSKPS…QGLKASMQDP (61 aa). A compositionally biased stretch (polar residues) spans 111-125; the sequence is RAQQIQSPTKTTADV. The 106-residue stretch at 150 to 255 folds into the HIT domain; sequence SQGLKASMQD…ISQDFDSPCL (106 aa). Interaction with DNA substrate regions lie at residues 175-179 and 237-238; these read DKYPK and SM. Residues 240 to 244 carry the Histidine triad motif motif; sequence HVHLH. The active-site Tele-AMP-histidine intermediate is His-242. The segment at 299 to 321 adopts a C2H2-type zinc-finger fold; that stretch reads LRCHVCGKEQTTIPKLKDHLKTH.

The protein localises to the nucleus. Its subcellular location is the nucleoplasm. It is found in the nucleolus. It carries out the reaction a 5'-end adenosine-5'-diphospho-5'-2'-deoxyribonucleoside-DNA + H2O = a 5'-end 5'-phospho-2'-deoxyribonucleoside-DNA + AMP + 2 H(+). The catalysed reaction is a 5'-end adenosine-5'-diphospho-5'-ribonucleoside-2'-deoxyribonucleotide-DNA + H2O = a 5'-end 5'-phospho-ribonucleoside-2'-deoxyribonucleotide-DNA + AMP + 2 H(+). It catalyses the reaction a 3'-end 2'-deoxyribonucleotide-3'-diphospho-5'-guanosine-DNA + H2O = a 3'-end 2'-deoxyribonucleotide 3'-phosphate-DNA + GMP + 2 H(+). Functionally, DNA-binding protein involved in single-strand DNA break repair, double-strand DNA break repair and base excision repair. Resolves abortive DNA ligation intermediates formed either at base excision sites, or when DNA ligases attempt to repair non-ligatable breaks induced by reactive oxygen species. Catalyzes the release of adenylate groups covalently linked to 5'-phosphate termini, resulting in the production of 5'-phosphate termini that can be efficiently rejoined. Also able to hydrolyze adenosine 5'-monophosphoramidate (AMP-NH(2)) and diadenosine tetraphosphate (AppppA), but with lower catalytic activity. Likewise, catalyzes the release of 3'-linked guanosine (DNAppG) and inosine (DNAppI) from DNA, but has higher specific activity with 5'-linked adenosine (AppDNA). The polypeptide is Aprataxin (aptx) (Danio rerio (Zebrafish)).